The following is a 135-amino-acid chain: HTH-type transcriptional activator AarP (135 aa).

One can recognise an HTH araC/xylS-type domain in the interval 22–120; sequence SEILVWIEGN…GISPSLYRLS (99 aa). 2 DNA-binding regions (H-T-H motif) span residues 39–60 and 87–110; these read DDIA…RKIV and VIDI…KAYL.

Its function is as follows. Transcriptional activator of 2'-N-acetyltransferase. The polypeptide is HTH-type transcriptional activator AarP (aarP) (Providencia stuartii).